We begin with the raw amino-acid sequence, 84 residues long: RNA-binding protein Hfq (84 aa).

In terms of domain architecture, Sm spans 10-69 (DPFLNILRKERIPVSIYLVNGIKLQGQIDSFDQYVVLLKNSVTQMVYKHAISTIVPAKAI).

It belongs to the Hfq family. As to quaternary structure, homohexamer.

In terms of biological role, RNA chaperone that binds small regulatory RNA (sRNAs) and mRNAs to facilitate mRNA translational regulation in response to envelope stress, environmental stress and changes in metabolite concentrations. Also binds with high specificity to tRNAs. The sequence is that of RNA-binding protein Hfq from Nitrosomonas europaea (strain ATCC 19718 / CIP 103999 / KCTC 2705 / NBRC 14298).